A 446-amino-acid polypeptide reads, in one-letter code: Adenylosuccinate synthetase 1 (446 aa).

GTP-binding positions include 20–26 (GDEGKGK) and 48–50 (GHT). Aspartate 21 (proton acceptor) is an active-site residue. The Mg(2+) site is built by aspartate 21 and glycine 48. IMP-binding positions include 21–24 (DEGK), 46–49 (NAGH), threonine 137, arginine 151, glutamine 232, threonine 247, and arginine 319. Histidine 49 serves as the catalytic Proton donor. 315-321 (SVTGRPR) contributes to the substrate binding site. Residues arginine 321, 347 to 349 (KLD), and 429 to 431 (STG) contribute to the GTP site.

It belongs to the adenylosuccinate synthetase family. As to quaternary structure, homodimer. Requires Mg(2+) as cofactor.

The protein resides in the cytoplasm. The enzyme catalyses IMP + L-aspartate + GTP = N(6)-(1,2-dicarboxyethyl)-AMP + GDP + phosphate + 2 H(+). Its pathway is purine metabolism; AMP biosynthesis via de novo pathway; AMP from IMP: step 1/2. Plays an important role in the de novo pathway of purine nucleotide biosynthesis. Catalyzes the first committed step in the biosynthesis of AMP from IMP. This Cupriavidus pinatubonensis (strain JMP 134 / LMG 1197) (Cupriavidus necator (strain JMP 134)) protein is Adenylosuccinate synthetase 1.